The primary structure comprises 458 residues: Argininosuccinate lyase (458 aa).

Belongs to the lyase 1 family. Argininosuccinate lyase subfamily.

The protein localises to the cytoplasm. The catalysed reaction is 2-(N(omega)-L-arginino)succinate = fumarate + L-arginine. The protein operates within amino-acid biosynthesis; L-arginine biosynthesis; L-arginine from L-ornithine and carbamoyl phosphate: step 3/3. This Geobacter metallireducens (strain ATCC 53774 / DSM 7210 / GS-15) protein is Argininosuccinate lyase.